The following is a 163-amino-acid chain: Nucleotide-binding protein LA_3406 (163 aa).

Belongs to the YajQ family.

Its function is as follows. Nucleotide-binding protein. In Leptospira interrogans serogroup Icterohaemorrhagiae serovar Lai (strain 56601), this protein is Nucleotide-binding protein LA_3406.